A 280-amino-acid chain; its full sequence is Shikimate dehydrogenase (NADP(+)) (280 aa).

Shikimate-binding positions include 23-25 (SLS) and Thr70. Lys74 functions as the Proton acceptor in the catalytic mechanism. Asn95 and Asp111 together coordinate shikimate. Residues 135–139 (GSGGA), 158–163 (NRTISK), and Ile221 each bind NADP(+). Tyr223 contacts shikimate. Gly247 contributes to the NADP(+) binding site.

The protein belongs to the shikimate dehydrogenase family. In terms of assembly, homodimer.

The enzyme catalyses shikimate + NADP(+) = 3-dehydroshikimate + NADPH + H(+). The protein operates within metabolic intermediate biosynthesis; chorismate biosynthesis; chorismate from D-erythrose 4-phosphate and phosphoenolpyruvate: step 4/7. In terms of biological role, involved in the biosynthesis of the chorismate, which leads to the biosynthesis of aromatic amino acids. Catalyzes the reversible NADPH linked reduction of 3-dehydroshikimate (DHSA) to yield shikimate (SA). The chain is Shikimate dehydrogenase (NADP(+)) from Buchnera aphidicola subsp. Cinara cedri (strain Cc).